The chain runs to 338 residues: Dehydrogenase/reductase SDR family member 7 (338 aa).

The N-terminal stretch at 1-28 (MSWELLLWLLALCALILPLVQLLRFLRA) is a signal peptide. Ser-60 and Ile-62 together coordinate NAD(+). Ser-190 contributes to the substrate binding site. Residues Tyr-203, Lys-207, and Ser-239 each contribute to the NAD(+) site. The Proton acceptor role is filled by Tyr-203.

It belongs to the short-chain dehydrogenases/reductases (SDR) family.

It localises to the endoplasmic reticulum membrane. The catalysed reaction is all-trans-retinol + NADP(+) = all-trans-retinal + NADPH + H(+). It carries out the reaction 5alpha-androstane-3alpha,17beta-diol + NADP(+) = 17beta-hydroxy-5alpha-androstan-3-one + NADPH + H(+). In terms of biological role, NADPH-dependent oxidoreductase which catalyzes the reduction of a variety of compounds bearing carbonyl groups including steroids, retinoids and xenobiotics. Catalyzes the reduction/inactivation of 5alpha-dihydrotestosterone to 3alpha-androstanediol, with a possible role in the modulation of androgen receptor function. Involved in the reduction of all-trans-retinal to all-trans-retinol. Converts cortisone to 20beta-dihydrocortisone in vitro, although the physiological relevance of this activity is questionable. Reduces exogenous compounds such as quinones (1,2-naphtoquinone, 9,10-phenantrenequinone and benzoquinone) and other xenobiotics (alpha-diketones) in vitro, suggesting a role in the biotransformation of xenobiotics with carbonyl group. A dehydrogenase activity has not been detected so far. May play a role as tumor suppressor. In Mus musculus (Mouse), this protein is Dehydrogenase/reductase SDR family member 7.